A 396-amino-acid polypeptide reads, in one-letter code: MSEYSLFTSESVSEGHPDKIADQISDAVLDAIIAEDKYARVACETLVKTGVAIIAGEVSTSAWVDLEDIVRNVILDIGYNSSDVGFDGATCGVMNIIGKQSVDIAQGVDRSKPEDQGAGDQGLMFGYASNETDVLMPAPITFSHQLVQRQAEARKSGLLPWLRPDAKSQVTCRYENGKVVGVDAIVLSTQHNPDVSYKDLREGVMELIVKHVIPAHLLHKDTQFHINPTGNFIIGGPVGDCGLTGRKIIVDTYGGMARHGGGAFSGKDPSKVDRSAAYAGRYVAKNIVAAGLAERCEIQVSYAIGVAQPMSISLNTFGTGKLSDDKIIKLVRDNFDLRPYAITTMLDLLHPMYQATAAYGHFGRTPVEMTIGDDTFTAFTWEKTDRADALRAAAGL.

His16 contacts ATP. Mg(2+) is bound at residue Asp18. Residue Glu44 coordinates K(+). Residues Glu57 and Gln100 each contribute to the L-methionine site. A flexible loop region spans residues 100–110; the sequence is QSVDIAQGVDR. Residues 165-167, Asp240, 246-247, Ala263, and Lys267 contribute to the ATP site; these read DAK and RK. Position 240 (Asp240) interacts with L-methionine. Lys271 provides a ligand contact to L-methionine.

Belongs to the AdoMet synthase family. As to quaternary structure, homotetramer; dimer of dimers. Mg(2+) is required as a cofactor. It depends on K(+) as a cofactor.

The protein resides in the cytoplasm. The catalysed reaction is L-methionine + ATP + H2O = S-adenosyl-L-methionine + phosphate + diphosphate. It functions in the pathway amino-acid biosynthesis; S-adenosyl-L-methionine biosynthesis; S-adenosyl-L-methionine from L-methionine: step 1/1. Catalyzes the formation of S-adenosylmethionine (AdoMet) from methionine and ATP. The overall synthetic reaction is composed of two sequential steps, AdoMet formation and the subsequent tripolyphosphate hydrolysis which occurs prior to release of AdoMet from the enzyme. The chain is S-adenosylmethionine synthase from Pseudomonas savastanoi pv. phaseolicola (strain 1448A / Race 6) (Pseudomonas syringae pv. phaseolicola (strain 1448A / Race 6)).